Consider the following 600-residue polypeptide: Na(+)/dicarboxylate cotransporter 3 (600 aa).

The Cytoplasmic portion of the chain corresponds to 1-16 (MAALAALAKKVWSARR). The helical transmembrane segment at 17-37 (LLVLLLVPLALLPILFALPPK) threads the bilayer. The Extracellular portion of the chain corresponds to 38-55 (EGRCLYVILLMAVYWCTE). A helical membrane pass occupies residues 56–76 (ALPLSVTALLPIILFPFMGIL). The Cytoplasmic portion of the chain corresponds to 77–82 (PSSKVC). Residues 83 to 103 (PQYFLDTNFLFLSGLIMASAI) form a helical membrane-spanning segment. Residues 104-137 (EERNLHRRIALKVLMLVGVQPARLILGMMVTTSF) lie on the Extracellular side of the membrane. Residues 138–158 (LSMWLSNTASTAMMLPIASAI) form a helical membrane-spanning segment. Topologically, residues 159 to 229 (LKSLFGQRDT…KEEEHRRNIW (71 aa)) are cytoplasmic. The helical transmembrane segment at 230–250 (KGFLISIPYSASIGGTATLTG) threads the bilayer. The Extracellular segment spans residues 251-278 (TAPNLILLGQLKSFFPQCDVVNFGSWFI). Residues 279–299 (FAFPLMLLFLLVGWLWISFLY) form a helical membrane-spanning segment. Residues 300–336 (GGMSWRGWRKKNSKLQDVAEDKAKAVIQEEFQNLGPI) are Cytoplasmic-facing. A helical membrane pass occupies residues 337 to 357 (KFAEQAVFILFCLFAILLFSR). At 358–372 (DPKFIPGWASLFAPG) the chain is on the extracellular side. Residues 373-393 (FVSDAVTGVAIVTILFFFPSQ) traverse the membrane as a helical segment. Residues 394 to 422 (KPSLKWWFDFKAPNSETEPLLSWKKAQET) lie on the Cytoplasmic side of the membrane. Residues 423–443 (VPWNIILLLGGGFAMAKGCEE) constitute an intramembrane region (helical). Topologically, residues 444 to 461 (SGLSAWIGGQLHPLEHVP) are cytoplasmic. A helical membrane pass occupies residues 462-482 (PLLAVLLITVVIAFFTEFASN). The Extracellular segment spans residues 483 to 505 (TATIIIFLPVLAELAIRLHVHPL). A helical membrane pass occupies residues 506–526 (YLMIPGTVSCSYAFMLPVSTP). Residues 527–546 (PNSIAFSTGHLLVKDMVRTG) lie on the Cytoplasmic side of the membrane. The chain crosses the membrane as a helical span at residues 547–567 (LLMNLMGVLLLSLAMNTWAQA). Over 568 to 600 (IFQLGTFPDWANTHAANVTALPPALTNNTVQTL) the chain is Extracellular. 2 N-linked (GlcNAc...) asparagine glycosylation sites follow: N584 and N594.

It belongs to the SLC13A/DASS transporter (TC 2.A.47) family. NADC subfamily. In terms of tissue distribution, highly expressed in proximal parts of straight tubules in the kidney. Detected in placenta, in brain, and in liver. Strongly expressed within the meningeal layers of supporting tissue that surround the brain and relatively weakly expressed throughout the cerebral cortex, hippocampus, and cerebellum.

Its subcellular location is the cell membrane. The enzyme catalyses succinate(out) + 3 Na(+)(out) = succinate(in) + 3 Na(+)(in). It carries out the reaction 2-oxoglutarate(out) + 3 Na(+)(out) = 2-oxoglutarate(in) + 3 Na(+)(in). The catalysed reaction is N-acetyl-L-aspartate(out) + 3 Na(+)(out) = N-acetyl-L-aspartate(in) + 3 Na(+)(in). It catalyses the reaction glutarate(out) + 3 Na(+)(out) = glutarate(in) + 3 Na(+)(in). The enzyme catalyses fumarate(out) + 3 Na(+)(out) = fumarate(in) + 3 Na(+)(in). It carries out the reaction malate(out) + 3 Na(+)(out) = malate(in) + 3 Na(+)(in). The catalysed reaction is 2,2-dimethylsuccinate(out) + 3 Na(+)(out) = 2,2-dimethylsuccinate(in) + 3 Na(+)(in). It catalyses the reaction 2,3-dimethylsuccinate(out) + 3 Na(+)(out) = 2,3-dimethylsuccinate(in) + 3 Na(+)(in). The enzyme catalyses itaconate(out) + 3 Na(+)(out) = itaconate(in) + 3 Na(+)(in). With respect to regulation, li(+) decreases succinate transport in the presence of Na(+). Functionally, high-affinity sodium-dicarboxylate cotransporter that accepts a range of substrates with 4-6 carbon atoms, such as the citric acid cycle intermediates succinate and alpha-ketoglutarate (2-oxoglutarate), as well as other compounds including N-acetyl-L-aspartate. Transports the dicarboxylate into the cell with a probable stoichiometry of 3 Na(+) for 1 divalent dicarboxylate, rendering the process electrogenic. Can transport citrate in a Na(+)-dependent manner, recognizing the divalent form of citrate rather than the trivalent form which is normally found in blood. Imports itaconate in hepatocytes leading to activation of TFEB-dependent lysosomal biogenesis involved in antibacterial innate immune response. This Rattus norvegicus (Rat) protein is Na(+)/dicarboxylate cotransporter 3 (Slc13a3).